The sequence spans 441 residues: Malate dehydrogenase [NADP], chloroplastic (441 aa).

A chloroplast-targeting transit peptide spans 1-58; sequence MALTQLNSTCSKPQLHSSSQLSFLSRTRTRTLPRHYHSTFAPLHRTQHARISCSVAPN. A disulfide bridge connects residues cysteine 76 and cysteine 81. An NADP(+)-binding site is contributed by 105–111; sequence GAAGMIS. Substrate contacts are provided by arginine 186 and arginine 192. Asparagine 199 serves as a coordination point for NADP(+). Glutamine 206 lines the NAD(+) pocket. 223 to 225 serves as a coordination point for NADP(+); sequence VGN. 2 residues coordinate substrate: asparagine 225 and arginine 256. The Proton acceptor role is filled by histidine 281. A disulfide bridge links cysteine 417 with cysteine 429.

Belongs to the LDH/MDH superfamily. MDH type 2 family. Homodimer.

The protein resides in the plastid. It localises to the chloroplast. It catalyses the reaction (S)-malate + NADP(+) = oxaloacetate + NADPH + H(+). Its activity is regulated as follows. Chloroplast NADP-MDH is activated upon illumination. In order to be enzymatically active, disulfide bridges on the protein must be reduced by thioredoxin which receives electrons from ferredoxin and the electron transport system of photosynthesis. The chloroplastic, NADP-dependent form is essential for the photosynthesis C4 cycle, which allows plants to circumvent the problem of photorespiration. In C4 plants, NADP-MDH activity acts to convert oxaloacetate to malate in chloroplasts of mesophyll cells for transport to the bundle sheath cells. The sequence is that of Malate dehydrogenase [NADP], chloroplastic from Pisum sativum (Garden pea).